The following is a 307-amino-acid chain: Carbamate kinase (307 aa).

It belongs to the carbamate kinase family.

The protein localises to the cytoplasm. It catalyses the reaction hydrogencarbonate + NH4(+) + ATP = carbamoyl phosphate + ADP + H2O + H(+). Its pathway is metabolic intermediate metabolism; carbamoyl phosphate degradation; CO(2) and NH(3) from carbamoyl phosphate: step 1/1. Its function is as follows. Carbamate kinase involved in the arginine deiminase pathway of fermentative arginine utilization. This Halobacterium salinarum (strain ATCC 700922 / JCM 11081 / NRC-1) (Halobacterium halobium) protein is Carbamate kinase (arcC).